Reading from the N-terminus, the 137-residue chain is Large ribosomal subunit protein uL22 (137 aa).

This sequence belongs to the universal ribosomal protein uL22 family. Part of the 50S ribosomal subunit.

Functionally, this protein binds specifically to 23S rRNA; its binding is stimulated by other ribosomal proteins, e.g. L4, L17, and L20. It is important during the early stages of 50S assembly. It makes multiple contacts with different domains of the 23S rRNA in the assembled 50S subunit and ribosome. In terms of biological role, the globular domain of the protein is located near the polypeptide exit tunnel on the outside of the subunit, while an extended beta-hairpin is found that lines the wall of the exit tunnel in the center of the 70S ribosome. The protein is Large ribosomal subunit protein uL22 of Flavobacterium johnsoniae (strain ATCC 17061 / DSM 2064 / JCM 8514 / BCRC 14874 / CCUG 350202 / NBRC 14942 / NCIMB 11054 / UW101) (Cytophaga johnsonae).